The sequence spans 558 residues: Formate--tetrahydrofolate ligase (558 aa).

An ATP-binding site is contributed by 67–74; it reads TPAGEGKT.

Belongs to the formate--tetrahydrofolate ligase family.

It carries out the reaction (6S)-5,6,7,8-tetrahydrofolate + formate + ATP = (6R)-10-formyltetrahydrofolate + ADP + phosphate. It participates in one-carbon metabolism; tetrahydrofolate interconversion. In Sphingobium sp. (strain NBRC 103272 / SYK-6), this protein is Formate--tetrahydrofolate ligase.